The primary structure comprises 326 residues: tRNA-modifying protein YgfZ (326 aa).

Residues tryptophan 27 and tryptophan 189 each contribute to the folate site.

This sequence belongs to the tRNA-modifying YgfZ family.

It is found in the cytoplasm. Functionally, folate-binding protein involved in regulating the level of ATP-DnaA and in the modification of some tRNAs. It is probably a key factor in regulatory networks that act via tRNA modification, such as initiation of chromosomal replication. The protein is tRNA-modifying protein YgfZ of Shigella boydii serotype 18 (strain CDC 3083-94 / BS512).